Reading from the N-terminus, the 61-residue chain is Alpha-conotoxine-like Am1.3 (61 aa).

Positions 1-21 (MGMRMMFTVFLLVVLATTVVS) are cleaved as a signal peptide. The propeptide occupies 22 to 44 (FMSGRASHGRNAAASDLIALTIK). Cysteine 60 carries the cysteine amide modification.

Belongs to the conotoxin A superfamily. In terms of processing, is not hydroxylated. Post-translationally, contains 2 disulfide bonds. Expressed by the venom duct.

Its subcellular location is the secreted. In terms of biological role, alpha-conotoxins act on postsynaptic membranes, they bind to the nicotinic acetylcholine receptors (nAChR) and thus inhibit them. The protein is Alpha-conotoxine-like Am1.3 of Conus amadis (Amadis cone).